We begin with the raw amino-acid sequence, 143 residues long: Protein SLC31A2 (143 aa).

Topologically, residues 1–22 are extracellular; sequence MPMHFIFSDEAVLLFDFWRVHS. Residues 23-43 traverse the membrane as a helical segment; sequence PTGMALSVLVVLLLAVLYEGI. The Cytoplasmic portion of the chain corresponds to 44–93; sequence KVGKAKLLHKTLESLPATNSQQFILGPDQDSTGSRSTSDNRTRLRWFLCY. Residue Thr-75 is modified to Phosphothreonine. Ser-77 carries the phosphoserine modification. A helical membrane pass occupies residues 94–114; the sequence is FGQSLVHVIQVVIGYFVMLAV. Topologically, residues 115–119 are extracellular; it reads MSYNT. Residues 120 to 140 form a helical membrane-spanning segment; it reads WIFLGVVLGSAVGYYLAYPLL. At 141–143 the chain is on the cytoplasmic side; sequence NMT.

It belongs to the copper transporter (Ctr) (TC 1.A.56) family. SLC31A subfamily. As to quaternary structure, oligomer. Interacts with SLC31A1; this interaction stabilizes SLC31A2 and protects it from ubiquitination and the subsequent degradation. In terms of processing, ubiquitinated; ubiquitination and the subsequent proteasomal degradation are prevent by SLC31A1 that stabilizes it.

The protein localises to the membrane. Its subcellular location is the cytoplasmic vesicle membrane. It is found in the late endosome membrane. It localises to the lysosome membrane. The protein resides in the recycling endosome membrane. Does not function as a copper(1+) importer in vivo. However, in vitro functions as a low-affinity copper(1+) importer. Regulator of SLC31A1 which facilitates the cleavage of the SLC31A1 ecto-domain or which stabilizes the truncated form of SLC31A1 (Truncated CTR1 form), thereby drives the SLC31A1 truncated form-dependent endosomal copper export and modulates the copper and cisplatin accumulation via SLC31A1. In Mus musculus (Mouse), this protein is Protein SLC31A2.